The sequence spans 295 residues: Cyclic dipyrimidine nucleotide synthase CdnE (295 aa).

Residues 1-25 are disordered; the sequence is MSIDWEQTFRKWSKPSSETESTKAE. Residues Gln51, Ser53, and Asn59 each contribute to the UTP site. Asp65 and Asp67 together coordinate Mg(2+). Positions 67, 124, and 125 each coordinate UTP. Mg(2+)-binding residues include Asp128 and Asp139. Asp139, Asn173, Lys201, and Ser220 together coordinate UTP. Residues 274–276 carry the Pyrimidine specificity motif (R/Q)xW in donor pocket motif; that stretch reads QMW.

It belongs to the CD-NTase family. E02 subfamily. It depends on Mg(2+) as a cofactor.

It carries out the reaction 2 UTP = c-di-UMP + 2 diphosphate. It catalyses the reaction UTP + CTP = cyclic CMP-UMP + 2 diphosphate. Cyclic nucleotide synthase (second messenger synthase) of a CBASS antivirus system. CBASS (cyclic oligonucleotide-based antiphage signaling system) provides immunity against bacteriophage. The CD-NTase protein synthesizes cyclic nucleotides in response to infection; these serve as specific second messenger signals. The signals activate a diverse range of effectors, leading to bacterial cell death and thus abortive phage infection. A type I-B(UU) CBASS system. Its function is as follows. Cyclic dinucleotide synthase that catalyzes the synthesis of 3',3'-cyclic UMP-UMP (c-di-UMP) as the major product, and of 3',3'-cyclic CMP-UMP as a minor product, which are second messengers for cell signal transduction. This Legionella pneumophila protein is Cyclic dipyrimidine nucleotide synthase CdnE.